A 363-amino-acid polypeptide reads, in one-letter code: MSQPIKFAYWVPNVSGGLVVSKIEQRTSWDIDYNRKLAQIAERSGFEYALSQIRFTAGYGADNQHESVTISHALLAATEKLKVIAAILPGPWSPALAAKQLATIDQFTGGRIAVNVVSGWFKGEFRAIGEPWLEHDERYRRSEEFIRALKGIWTQDNFSFHGDFYRFNDYTLKPKPLQRPHPEIFQGGSSRAARDMASRVSDWYFTNGNSVEGIKAQVDDIRAKAAANGHAVKIGVNAFVIARDTEEEARAVLAEIIAKADPEAVNGFGSEVKNAGAASPEGEGNWAKSTFEDLVQYNDGFKTNLIGTPRQIAERIVALKAIGVDLILSGFLHFQEEVEYFGRHVLPLVRELEQERRAAVAVA.

Belongs to the SsuD family.

It catalyses the reaction dimethyl sulfone + FMNH2 + O2 = methanesulfinate + FMN + formaldehyde + H2O + 2 H(+). Functionally, involved in the dimethyl sulfide degradation pathway. Catalyzes the oxidation of dimethylsulfone (DMSO2) to yield methanesulfinate, which is oxidized spontaneously to methanesulfonate in the presence of dioxygen and FMNH(2). The polypeptide is FMNH(2)-dependent dimethylsulfone monooxygenase (Pseudomonas putida (Arthrobacter siderocapsulatus)).